Here is a 232-residue protein sequence, read N- to C-terminus: Recombination protein RecR (232 aa).

A C4-type zinc finger spans residues Cys92–Cys107. The region spanning Ser115–Pro209 is the Toprim domain.

This sequence belongs to the RecR family.

Its function is as follows. May play a role in DNA repair. It seems to be involved in an RecBC-independent recombinational process of DNA repair. It may act with RecF and RecO. The protein is Recombination protein RecR of Synechocystis sp. (strain ATCC 27184 / PCC 6803 / Kazusa).